Here is a 531-residue protein sequence, read N- to C-terminus: Glucose-6-phosphate exchanger SLC37A1 (531 aa).

Residues 18 to 38 (QWYRAFIFMLTFLLYASFHLS) form a helical membrane-spanning segment. A disordered region spans residues 53–72 (CTAGDGPESPFSDPSSSTRH). A run of 11 helical transmembrane segments spans residues 100 to 120 (GALD…SGII), 129 to 149 (YLTF…LGYF), 157 to 177 (FYVV…PSVV), 192 to 214 (IMGI…AGYW), 222 to 242 (SFIV…LFLI), 332 to 352 (LCLL…PLYI), 364 to 384 (GELS…AGVI), 392 to 412 (ASTC…FSSV), 419 to 439 (ATIA…ALIT), 464 to 484 (AIID…AGLI), and 488 to 508 (GWSN…LFLV).

It belongs to the major facilitator superfamily. Organophosphate:Pi antiporter (OPA) (TC 2.A.1.4) family.

Its subcellular location is the endoplasmic reticulum membrane. It carries out the reaction D-glucose 6-phosphate(in) + phosphate(out) = D-glucose 6-phosphate(out) + phosphate(in). Its activity is regulated as follows. Inhibited by vanadate but not by chlorogenic acid. In terms of biological role, inorganic phosphate and glucose-6-phosphate antiporter. May transport cytoplasmic glucose-6-phosphate into the lumen of the endoplasmic reticulum and translocate inorganic phosphate into the opposite direction. Independent of a lumenal glucose-6-phosphatase. May not play a role in homeostatic regulation of blood glucose levels. This chain is Glucose-6-phosphate exchanger SLC37A1, found in Mus musculus (Mouse).